The primary structure comprises 306 residues: tRNA dimethylallyltransferase (306 aa).

Position 12 to 19 (12 to 19 (GPTAAGKT)) interacts with ATP. Substrate is bound at residue 14 to 19 (TAAGKT). Interaction with substrate tRNA stretches follow at residues 37 to 40 (DSAL), 161 to 165 (QRINR), and 242 to 247 (RCVGYR).

This sequence belongs to the IPP transferase family. In terms of assembly, monomer. The cofactor is Mg(2+).

It carries out the reaction adenosine(37) in tRNA + dimethylallyl diphosphate = N(6)-dimethylallyladenosine(37) in tRNA + diphosphate. Functionally, catalyzes the transfer of a dimethylallyl group onto the adenine at position 37 in tRNAs that read codons beginning with uridine, leading to the formation of N6-(dimethylallyl)adenosine (i(6)A). In Pseudoalteromonas translucida (strain TAC 125), this protein is tRNA dimethylallyltransferase.